An 86-amino-acid chain; its full sequence is Large ribosomal subunit protein bL31B (86 aa).

The protein belongs to the bacterial ribosomal protein bL31 family. Type B subfamily. In terms of assembly, part of the 50S ribosomal subunit.

This Vibrio parahaemolyticus serotype O3:K6 (strain RIMD 2210633) protein is Large ribosomal subunit protein bL31B.